We begin with the raw amino-acid sequence, 306 residues long: Heme A synthase (306 aa).

The Cytoplasmic segment spans residues 1 to 5; the sequence is MKALR. Residues 6-26 form a helical membrane-spanning segment; the sequence is AVSLANTAVMLLAVLWGAWVT. Topologically, residues 27–56 are extracellular; sequence SSDSGDGCGASWPLCKGTFMPDWDYAAIVE. A disulfide bridge connects residues Cys34 and Cys41. Glu56 is a catalytic residue. The chain crosses the membrane as a helical span at residues 57–77; it reads FGHRVVSALAGLLSVAVLVWV. His59 provides a ligand contact to heme o. Residues 78-89 are Cytoplasmic-facing; sequence ARVRPSETRLKR. Residues 90-110 form a helical membrane-spanning segment; sequence LAFGTFFFVVLQGGLGAAAVL. Topologically, residues 111–116 are extracellular; it reads RPQPDL. The chain crosses the membrane as a helical span at residues 117–137; sequence VMALHFGFSLLCFTFALLVTV. Residue His121 coordinates heme o. Topologically, residues 138–164 are cytoplasmic; that stretch reads ALGQGERAAFQRPDVSAQPVAPGLRTQ. The chain crosses the membrane as a helical span at residues 165 to 185; sequence IWGLAVYTYLVVYLGAYVRHL. Residues 186–206 lie on the Extracellular side of the membrane; that stretch reads GASMACTGWPLCNGELIPPLY. A disulfide bridge links Cys191 with Cys197. Residues 207 to 227 form a helical membrane-spanning segment; it reads GPVGANFAHRLGAALAVVLVL. Heme b is bound at residue His215. Residues 228-247 are Cytoplasmic-facing; sequence RLWWTARRLTERDDLRRGAA. Residues 248–268 form a helical membrane-spanning segment; that stretch reads WALALMAAQVASGALFPLGYL. At 269–277 the chain is on the extracellular side; the sequence is NLLTQLLHT. His276 lines the heme b pocket. Residues 278-298 traverse the membrane as a helical segment; it reads GLITGFWGVLSYLCYLTLPVG. Residues 299 to 306 are Cytoplasmic-facing; that stretch reads RETVAVSA.

This sequence belongs to the COX15/CtaA family. Type 1 subfamily. As to quaternary structure, interacts with CtaB. The cofactor is heme b.

The protein resides in the cell membrane. The enzyme catalyses Fe(II)-heme o + 2 A + H2O = Fe(II)-heme a + 2 AH2. It participates in porphyrin-containing compound metabolism; heme A biosynthesis; heme A from heme O: step 1/1. Its function is as follows. Catalyzes the conversion of heme O to heme A by two successive hydroxylations of the methyl group at C8. The first hydroxylation forms heme I, the second hydroxylation results in an unstable dihydroxymethyl group, which spontaneously dehydrates, resulting in the formyl group of heme A. The protein is Heme A synthase of Symbiobacterium thermophilum (strain DSM 24528 / JCM 14929 / IAM 14863 / T).